The chain runs to 573 residues: Thiol:disulfide interchange protein DsbD (573 aa).

A signal peptide spans M1–A20. The Periplasmic portion of the chain corresponds to G21–S175. Disulfide bonds link C121–C126 and C191–C313. The chain crosses the membrane as a helical span at residues I176–L196. Residues P197–A227 lie on the Cytoplasmic side of the membrane. Residues L228–L248 form a helical membrane-spanning segment. At Q249–P251 the chain is on the periplasmic side. The chain crosses the membrane as a helical span at residues A252–F272. Residues E273 to Q292 are Cytoplasmic-facing. Residues G293–C313 traverse the membrane as a helical segment. At T314–L331 the chain is on the periplasmic side. The chain crosses the membrane as a helical span at residues L332–I352. The Cytoplasmic portion of the chain corresponds to T353–E365. A helical transmembrane segment spans residues W366–I386. The Periplasmic segment spans residues S387 to H393. Residues Y394–L414 traverse the membrane as a helical segment. Over N415–R425 the chain is Cytoplasmic. A helical membrane pass occupies residues I426–T446. One can recognise a Thioredoxin domain in the interval A440–L573. The Periplasmic portion of the chain corresponds to T447 to L573. Residues C490 and C493 are joined by a disulfide bond.

The protein belongs to the thioredoxin family. DsbD subfamily.

The protein localises to the cell inner membrane. The enzyme catalyses [protein]-dithiol + NAD(+) = [protein]-disulfide + NADH + H(+). It carries out the reaction [protein]-dithiol + NADP(+) = [protein]-disulfide + NADPH + H(+). Its function is as follows. Required to facilitate the formation of correct disulfide bonds in some periplasmic proteins and for the assembly of the periplasmic c-type cytochromes. Acts by transferring electrons from cytoplasmic thioredoxin to the periplasm. This transfer involves a cascade of disulfide bond formation and reduction steps. The sequence is that of Thiol:disulfide interchange protein DsbD from Haemophilus ducreyi (strain 35000HP / ATCC 700724).